We begin with the raw amino-acid sequence, 131 residues long: MLSFEGKVSSGLQKAGQFMEKEVYKKQYLDKLGFIPYHGTLNIKLSNNITLNLDNLHDKLKRIHGNGSFGDVLFLEAYLSTIDEKITKKGAILFPVKTVYDTDTLEYVSSEKLRDTLNLKDGDKVIIKIEK.

11 to 16 (GLQKAG) is a binding site for CDP. Mg(2+) contacts are provided by T40 and N42. The FMN site is built by T98 and E106. Residue 111–114 (EKLR) participates in CDP binding.

It belongs to the archaeal riboflavin kinase family. Requires Mg(2+) as cofactor.

It carries out the reaction riboflavin + CTP = CDP + FMN + H(+). It functions in the pathway cofactor biosynthesis; FMN biosynthesis; FMN from riboflavin (CTP route): step 1/1. Catalyzes the CTP-dependent phosphorylation of riboflavin (vitamin B2) to form flavin mononucleotide (FMN). The protein is Riboflavin kinase of Methanosphaera stadtmanae (strain ATCC 43021 / DSM 3091 / JCM 11832 / MCB-3).